The following is a 319-amino-acid chain: Transaldolase (319 aa).

The active-site Schiff-base intermediate with substrate is the Lys-125.

This sequence belongs to the transaldolase family. Type 1 subfamily. As to quaternary structure, homodimer.

It localises to the cytoplasm. It catalyses the reaction D-sedoheptulose 7-phosphate + D-glyceraldehyde 3-phosphate = D-erythrose 4-phosphate + beta-D-fructose 6-phosphate. It participates in carbohydrate degradation; pentose phosphate pathway; D-glyceraldehyde 3-phosphate and beta-D-fructose 6-phosphate from D-ribose 5-phosphate and D-xylulose 5-phosphate (non-oxidative stage): step 2/3. Functionally, transaldolase is important for the balance of metabolites in the pentose-phosphate pathway. This Ralstonia nicotianae (strain ATCC BAA-1114 / GMI1000) (Ralstonia solanacearum) protein is Transaldolase.